Here is a 61-residue protein sequence, read N- to C-terminus: uncharacterized protein (61 aa).

This is an uncharacterized protein from Escherichia coli O6:K15:H31 (strain 536 / UPEC).